Reading from the N-terminus, the 600-residue chain is Elongation factor 4 (600 aa).

The tr-type G domain maps to 5–187 (KYIRNFSIIA…AIVNKLHPPK (183 aa)). GTP-binding positions include 17 to 22 (DHGKST) and 134 to 137 (NKID).

This sequence belongs to the TRAFAC class translation factor GTPase superfamily. Classic translation factor GTPase family. LepA subfamily.

It localises to the cell inner membrane. The catalysed reaction is GTP + H2O = GDP + phosphate + H(+). Its function is as follows. Required for accurate and efficient protein synthesis under certain stress conditions. May act as a fidelity factor of the translation reaction, by catalyzing a one-codon backward translocation of tRNAs on improperly translocated ribosomes. Back-translocation proceeds from a post-translocation (POST) complex to a pre-translocation (PRE) complex, thus giving elongation factor G a second chance to translocate the tRNAs correctly. Binds to ribosomes in a GTP-dependent manner. In Rickettsia akari (strain Hartford), this protein is Elongation factor 4.